Consider the following 452-residue polypeptide: THO complex subunit 5A (452 aa).

The protein belongs to the THOC5 family. Component of the THO complex, which is composed of THO1, THO2, THO3, THO5, THO6 and THO7.

The protein resides in the nucleus. Acts as a component of the THO subcomplex of the TREX complex which is thought to couple mRNA transcription, processing and nuclear export. The chain is THO complex subunit 5A (THO5A) from Arabidopsis thaliana (Mouse-ear cress).